The chain runs to 169 residues: NADH-quinone oxidoreductase subunit I (169 aa).

2 4Fe-4S ferredoxin-type domains span residues 61–90 and 100–129; these read RRYDNGEERCIACKLCEAVCPALAITIESE and TRYDIDLTKCIFCGFCEESCPVDSIVETHI. [4Fe-4S] cluster-binding residues include cysteine 70, cysteine 73, cysteine 76, cysteine 80, cysteine 109, cysteine 112, cysteine 115, and cysteine 119.

The protein belongs to the complex I 23 kDa subunit family. In terms of assembly, NDH-1 is composed of 14 different subunits. Subunits NuoA, H, J, K, L, M, N constitute the membrane sector of the complex. [4Fe-4S] cluster serves as cofactor.

Its subcellular location is the cell inner membrane. The enzyme catalyses a quinone + NADH + 5 H(+)(in) = a quinol + NAD(+) + 4 H(+)(out). Its function is as follows. NDH-1 shuttles electrons from NADH, via FMN and iron-sulfur (Fe-S) centers, to quinones in the respiratory chain. The immediate electron acceptor for the enzyme in this species is believed to be ubiquinone. Couples the redox reaction to proton translocation (for every two electrons transferred, four hydrogen ions are translocated across the cytoplasmic membrane), and thus conserves the redox energy in a proton gradient. The polypeptide is NADH-quinone oxidoreductase subunit I (Verminephrobacter eiseniae (strain EF01-2)).